A 187-amino-acid chain; its full sequence is ATP synthase subunit delta (187 aa).

The protein belongs to the ATPase delta chain family. F-type ATPases have 2 components, F(1) - the catalytic core - and F(0) - the membrane proton channel. F(1) has five subunits: alpha(3), beta(3), gamma(1), delta(1), epsilon(1). F(0) has three main subunits: a(1), b(2) and c(10-14). The alpha and beta chains form an alternating ring which encloses part of the gamma chain. F(1) is attached to F(0) by a central stalk formed by the gamma and epsilon chains, while a peripheral stalk is formed by the delta and b chains.

The protein resides in the cell inner membrane. Functionally, f(1)F(0) ATP synthase produces ATP from ADP in the presence of a proton or sodium gradient. F-type ATPases consist of two structural domains, F(1) containing the extramembraneous catalytic core and F(0) containing the membrane proton channel, linked together by a central stalk and a peripheral stalk. During catalysis, ATP synthesis in the catalytic domain of F(1) is coupled via a rotary mechanism of the central stalk subunits to proton translocation. This protein is part of the stalk that links CF(0) to CF(1). It either transmits conformational changes from CF(0) to CF(1) or is implicated in proton conduction. The sequence is that of ATP synthase subunit delta from Leptospira biflexa serovar Patoc (strain Patoc 1 / Ames).